The sequence spans 458 residues: Argininosuccinate lyase (458 aa).

This sequence belongs to the lyase 1 family. Argininosuccinate lyase subfamily.

It localises to the cytoplasm. It carries out the reaction 2-(N(omega)-L-arginino)succinate = fumarate + L-arginine. It functions in the pathway amino-acid biosynthesis; L-arginine biosynthesis; L-arginine from L-ornithine and carbamoyl phosphate: step 3/3. The sequence is that of Argininosuccinate lyase from Buchnera aphidicola subsp. Baizongia pistaciae (strain Bp).